Reading from the N-terminus, the 476-residue chain is RNA-splicing ligase RtcB homolog (476 aa).

Asp90, Cys93, His198, His230, and His324 together coordinate Mn(2+). 197 to 201 (NHYAE) is a binding site for GMP. GMP is bound by residues 324–325 (HN), 373–376 (GGTM), Ser380, 399–402 (HGAG), and Lys475. His399 functions as the GMP-histidine intermediate in the catalytic mechanism.

It belongs to the RtcB family. Catalytic component of the tRNA-splicing ligase complex. Mn(2+) serves as cofactor.

The catalysed reaction is a 3'-end 3'-phospho-ribonucleotide-RNA + a 5'-end dephospho-ribonucleoside-RNA + GTP = a ribonucleotidyl-ribonucleotide-RNA + GMP + diphosphate. It carries out the reaction a 3'-end 2',3'-cyclophospho-ribonucleotide-RNA + a 5'-end dephospho-ribonucleoside-RNA + GTP + H2O = a ribonucleotidyl-ribonucleotide-RNA + GMP + diphosphate + H(+). Functionally, catalytic subunit of the tRNA-splicing ligase complex that acts by directly joining spliced tRNA halves to mature-sized tRNAs by incorporating the precursor-derived splice junction phosphate into the mature tRNA as a canonical 3',5'-phosphodiester. May act as an RNA ligase with broad substrate specificity, and may function toward other RNAs. The chain is RNA-splicing ligase RtcB homolog from Chlamydomonas reinhardtii (Chlamydomonas smithii).